Reading from the N-terminus, the 248-residue chain is Transcription factor bHLH35 (248 aa).

Positions 37 to 54 (SGSYDSSSPDGAASSPAS) are enriched in low complexity. The tract at residues 37–60 (SGSYDSSSPDGAASSPASKNIVSE) is disordered. The 50-residue stretch at 51–100 (SPASKNIVSERNRRQKLNQRLFALRSVVPNITKMDKASIIKDAISYIEGL) folds into the bHLH domain.

In terms of assembly, homodimer. As to expression, expressed constitutively in roots, leaves, stems, and flowers.

Its subcellular location is the nucleus. In Arabidopsis thaliana (Mouse-ear cress), this protein is Transcription factor bHLH35 (BHLH35).